The primary structure comprises 336 residues: Probable long-chain-alcohol O-fatty-acyltransferase 8 (336 aa).

Helical transmembrane passes span 7 to 27 (SFVK…YIPS), 38 to 58 (SVLP…FTIF), 59 to 79 (SSTT…LFAF), 82 to 102 (GPLL…CLPI), 117 to 135 (WVFF…VHNY), 152 to 172 (LYLV…IILG), 228 to 248 (MGCW…YFYI), and 284 to 304 (PMLS…FLFF).

It belongs to the wax synthase family.

The protein resides in the membrane. It carries out the reaction a long chain fatty alcohol + a fatty acyl-CoA = a wax ester + CoA. Its function is as follows. Catalyzes the final step in the synthesis of long-chain linear esters (waxes). The polypeptide is Probable long-chain-alcohol O-fatty-acyltransferase 8 (Arabidopsis thaliana (Mouse-ear cress)).